We begin with the raw amino-acid sequence, 317 residues long: DNA-directed RNA polymerase subunit alpha (317 aa).

The interval 1-234 (MKQFVRPEFI…AHLEFFIDLN (234 aa)) is alpha N-terminal domain (alpha-NTD). Residues 249 to 317 (DDKELDRTVE…ASLGLAFRQS (69 aa)) form an alpha C-terminal domain (alpha-CTD) region.

This sequence belongs to the RNA polymerase alpha chain family. In terms of assembly, homodimer. The RNAP catalytic core consists of 2 alpha, 1 beta, 1 beta' and 1 omega subunit. When a sigma factor is associated with the core the holoenzyme is formed, which can initiate transcription.

The catalysed reaction is RNA(n) + a ribonucleoside 5'-triphosphate = RNA(n+1) + diphosphate. Functionally, DNA-dependent RNA polymerase catalyzes the transcription of DNA into RNA using the four ribonucleoside triphosphates as substrates. The sequence is that of DNA-directed RNA polymerase subunit alpha from Mycoplasma capricolum subsp. capricolum (strain California kid / ATCC 27343 / NCTC 10154).